Consider the following 449-residue polypeptide: MESSPIPQSSGNSSTLGRALQTPGPSTASGVPELGLRDVASESVALFFMLLLDLTAVAGNAAVMAVIAKTPALRKFVFVFHLCLVDLLAALTLMPLAMLSSSALFDHALFGEVACRLYLFLSVCFVSLAILSVSAINVERYYYVVHPMRYEVRMTLGLVASVLVGVWVKALAMASVPVLGRVYWEEGAPSVNPGCSLQWSHSAYCQLFVVVFAVLYFLLPLILIFVVYCSMFRVARVAAMQHGPLPTWMETPRQRSESLSSRSTMVTSSGAHQTTPHRTFGGGKAAVVLLAVGGQFLLCWLPYFSFHLYVALSAQPISAGQVENVVTWIGYFCFTSNPFFYGCLNRQIRGELSKQFVCFFKAAPEEELRLPSREGSIEENFLQFLQGTSENWVSRPLPSPKREPPPVVDFRIPGQIAEETSEFLEQQLTSDIIMSDSYLRPAPSPRLES.

Over residues 1–14 (MESSPIPQSSGNSS) the composition is skewed to low complexity. Residues 1 to 29 (MESSPIPQSSGNSSTLGRALQTPGPSTAS) are disordered. The Extracellular portion of the chain corresponds to 1-44 (MESSPIPQSSGNSSTLGRALQTPGPSTASGVPELGLRDVASESV). The N-linked (GlcNAc...) asparagine glycan is linked to Asn-12. The helical transmembrane segment at 45-67 (ALFFMLLLDLTAVAGNAAVMAVI) threads the bilayer. Over 68–75 (AKTPALRK) the chain is Cytoplasmic. A helical transmembrane segment spans residues 76 to 98 (FVFVFHLCLVDLLAALTLMPLAM). Topologically, residues 99–112 (LSSSALFDHALFGE) are extracellular. A helical membrane pass occupies residues 113-135 (VACRLYLFLSVCFVSLAILSVSA). Residues 136 to 155 (INVERYYYVVHPMRYEVRMT) are Cytoplasmic-facing. A helical membrane pass occupies residues 156–178 (LGLVASVLVGVWVKALAMASVPV). Topologically, residues 179–206 (LGRVYWEEGAPSVNPGCSLQWSHSAYCQ) are extracellular. A helical transmembrane segment spans residues 207–229 (LFVVVFAVLYFLLPLILIFVVYC). The Cytoplasmic portion of the chain corresponds to 230–287 (SMFRVARVAAMQHGPLPTWMETPRQRSESLSSRSTMVTSSGAHQTTPHRTFGGGKAAV). A helical transmembrane segment spans residues 288 to 310 (VLLAVGGQFLLCWLPYFSFHLYV). Residues 311–324 (ALSAQPISAGQVEN) are Extracellular-facing. Residues 325-344 (VVTWIGYFCFTSNPFFYGCL) traverse the membrane as a helical segment. At 345-449 (NRQIRGELSK…RPAPSPRLES (105 aa)) the chain is on the cytoplasmic side.

This sequence belongs to the G-protein coupled receptor 1 family. Forms heterodimer with MTNR1B. Interacts with ARRB1 and ARRB2 in a spontaneous and agonist-independent manner; leading to the internalization of GPR61 in the endosomal compartment. In terms of tissue distribution, predominantly expressed in the brain and testes, with relatively lower expression observed in the eye, adrenal gland and pituitary gland.

It localises to the cell membrane. The protein localises to the endosome membrane. In terms of biological role, orphan G-protein coupled receptor. Constitutively activates the G(s)-alpha/cAMP signaling pathway. Shows a reciprocal regulatory interaction with the melatonin receptor MTNR1B most likely through receptor heteromerization. May be involved in the regulation of food intake and body weight. The chain is G-protein coupled receptor 61 (Gpr61) from Mus musculus (Mouse).